The sequence spans 246 residues: DNA polymerase sliding clamp (246 aa).

This sequence belongs to the PCNA family. In terms of assembly, homotrimer. The subunits circularize to form a toroid; DNA passes through its center. Replication factor C (RFC) is required to load the toroid on the DNA.

Sliding clamp subunit that acts as a moving platform for DNA processing. Responsible for tethering the catalytic subunit of DNA polymerase and other proteins to DNA during high-speed replication. This Methanocella arvoryzae (strain DSM 22066 / NBRC 105507 / MRE50) protein is DNA polymerase sliding clamp.